A 397-amino-acid polypeptide reads, in one-letter code: G2/mitotic-specific cyclin-B1 (397 aa).

Residues 1 to 17 (MALRVTRNTRLASSENQ) show a composition bias toward polar residues. The segment at 1–30 (MALRVTRNTRLASSENQGALPGKAAVANKP) is disordered.

It belongs to the cyclin family. Cyclin AB subfamily. In terms of assembly, interacts with the CDK1 protein kinase to form a serine/threonine kinase holoenzyme complex also known as maturation promoting factor (MPF). The cyclin subunit imparts substrate specificity to the complex.

In terms of biological role, essential for the control of the cell cycle at the G2/M (mitosis) transition. The protein is G2/mitotic-specific cyclin-B1 (ccnb1) of Carassius auratus (Goldfish).